A 314-amino-acid polypeptide reads, in one-letter code: tRNA dimethylallyltransferase (314 aa).

Position 36-43 (36-43) interacts with ATP; the sequence is GPTASGKT. 38 to 43 lines the substrate pocket; sequence TASGKT. The tract at residues 61–64 is interaction with substrate tRNA; that stretch reads DSVQ.

The protein belongs to the IPP transferase family. As to quaternary structure, monomer. The cofactor is Mg(2+).

It carries out the reaction adenosine(37) in tRNA + dimethylallyl diphosphate = N(6)-dimethylallyladenosine(37) in tRNA + diphosphate. In terms of biological role, catalyzes the transfer of a dimethylallyl group onto the adenine at position 37 in tRNAs that read codons beginning with uridine, leading to the formation of N6-(dimethylallyl)adenosine (i(6)A). This is tRNA dimethylallyltransferase from Sorangium cellulosum (strain So ce56) (Polyangium cellulosum (strain So ce56)).